Reading from the N-terminus, the 573-residue chain is MSEIITLSYGSICNNTVTHLYNTQESLISYTPSSKPNHDLQVFLTRFKSTSVSYSPRALIYDLRNGLGALNKYEYHETLPVDLNFSLLSTNTTAPAGAETGAGSSLESGYNLKKSRVEKNEYQQKLDQGVTDGSSLNVNNTKYWTDYNKLIYNPKSLTTVNNFVHNENNHESGYHYNFNSLKYDSFNIGQEEFKACNNGNGGYGYDDNDNNKSIENFRYFLEKTDRLQGLQLLTNLNDAWGGFTSEMLIDLIDEFFNNTSSDKQNLWIYGIMNSTKLSEKTQSIRTKLSFIKTLIELTKQSSLIFPMNLNNSKDESWHNNYSMLTDKYNSGSNWHQSSLYATFINSIWGLNNQLKNQISMTHLQNDIVKLNPNQKIINQIKIKQEKSGNGDKQNQLFGSDLNQFNLKDIVNLKDLSNLGKSSDTSATQREINLGISKNASTNTGNDAYHNFVQNRISSSTSQNEKMMKDKEQEQNGIINNYLNPYIDNIFQVETFPVDILKSSSNAINISTEFNVNDGLKSYLKPYIKLVSNIRNQHREYLDIIEDKEELLEDLNNISQEYSYGYESDDEDYE.

This sequence belongs to the misato family.

Its subcellular location is the mitochondrion. Its function is as follows. Involved in the partitioning of the mitochondrial organelle and mitochondrial DNA (mtDNA) inheritance. In Candida albicans (strain SC5314 / ATCC MYA-2876) (Yeast), this protein is Protein DML1 (DML1).